Here is a 669-residue protein sequence, read N- to C-terminus: DNA mismatch repair protein MutL (669 aa).

2 disordered regions span residues 354–402 and 448–479; these read NRPA…ENPY and TVSH…PLES. Residues 448-468 show a composition bias toward polar residues; it reads TVSHDSPPNRTAPDATTSSSK.

Belongs to the DNA mismatch repair MutL/HexB family.

Its function is as follows. This protein is involved in the repair of mismatches in DNA. It is required for dam-dependent methyl-directed DNA mismatch repair. May act as a 'molecular matchmaker', a protein that promotes the formation of a stable complex between two or more DNA-binding proteins in an ATP-dependent manner without itself being part of a final effector complex. The polypeptide is DNA mismatch repair protein MutL (Pectobacterium carotovorum subsp. carotovorum (strain PC1)).